Reading from the N-terminus, the 1477-residue chain is Oligomycin resistance ATP-dependent permease YOR1 (1477 aa).

Residues 1 to 48 (MTITVGDAVSETELENKSQNVVLSPKASASSDISTDVDKDTSSSWDDK) are disordered. The Cytoplasmic segment spans residues 1-206 (MTITVGDAVS…RALLFTFKKQ (206 aa)). Residues S10 and S24 each carry the phosphoserine modification. Residues 36–48 (DVDKDTSSSWDDK) show a composition bias toward basic and acidic residues. The residue at position 53 (T53) is a Phosphothreonine. The Diacidic ER export motif DxE motif lies at 71 to 73 (DIE). A helical membrane pass occupies residues 207 to 227 (YFMSIVFAILANCTSGFNPMI). One can recognise an ABC transmembrane type-1 1 domain in the interval 207–493 (YFMSIVFAIL…LPIAIGTGID (287 aa)). Residues 228–249 (TKRLIEFVEEKAIFHSMHVNKG) lie on the Extracellular side of the membrane. A helical membrane pass occupies residues 250–270 (IGYAIGACLMMFVNGLTFNHF). The Cytoplasmic portion of the chain corresponds to 271–328 (FHTSQLTGVQAKSILTKAAMKKMFNASNYARHCFPNGKVTSFVTTDLARIEFALSFQP). Residues 329 to 349 (FLAGFPAILAICIVLLIVNLG) traverse the membrane as a helical segment. At 350–357 (PIALVGIG) the chain is on the extracellular side. Residues 358–370 (IFFGGFFISLFAF) traverse the membrane as a helical segment. The Cytoplasmic portion of the chain corresponds to 371–433 (KLILGFRIAA…KVRKMQLSRN (63 aa)). Residues 434-454 (FLIAMAMSLPSIASLVTFLAM) form a helical membrane-spanning segment. The Extracellular segment spans residues 455–478 (YKVNKGGRQPGNIFASLSLFQVLS). A helical transmembrane segment spans residues 479 to 499 (LQMFFLPIAIGTGIDMIIGLG). Residues 500–615 (RLQSLLEAPE…DLNFDIKKGE (116 aa)) lie on the Cytoplasmic side of the membrane. Positions 552–595 (KGEAKDEGKKNKKKRKDTWGKPSASTNKAKRLDNMLKDRDGPED) are disordered. Residues 581–595 (KRLDNMLKDRDGPED) show a composition bias toward basic and acidic residues. An ABC transporter 1 domain is found at 581–808 (KRLDNMLKDR…NQTLINLLQF (228 aa)). A helical transmembrane segment spans residues 616–636 (FIMITGPIGTGKSSLLNAMAG). Position 621 to 628 (621 to 628 (GPIGTGKS)) interacts with ATP. Topologically, residues 637 to 892 (SMRKTDGKVE…EYIKAAVGKW (256 aa)) are extracellular. N661, N759, and N799 each carry an N-linked (GlcNAc...) asparagine glycan. The chain crosses the membrane as a helical span at residues 893-913 (GFIALPLYAILVVGTTFCSLF). Residues 897 to 1175 (LPLYAILVVG…ILRAMTQTEN (279 aa)) form the ABC transmembrane type-1 2 domain. Residues 914 to 940 (SSVWLSYWTENKFKNRPPSFYMGLYSF) lie on the Cytoplasmic side of the membrane. Residues 941–961 (FVFAAFIFMNGQFTILCAMGI) form a helical membrane-spanning segment. At 962 to 1027 (MASKWLNLRA…ANIVGVCVMC (66 aa)) the chain is on the extracellular side. A helical membrane pass occupies residues 1028-1048 (IVYLPWFAIAIPFLLVIFVLI). The Cytoplasmic portion of the chain corresponds to 1049-1117 (ADHYQSSGRE…GYLVVVLQRW (69 aa)). A helical transmembrane segment spans residues 1118–1138 (VGIFLDMVAIAFALIITLLCV). Residues 1139 to 1141 (TRA) are Extracellular-facing. Residues 1142–1162 (FPISAASVGVLLTYVLQLPGL) form a helical membrane-spanning segment. At 1163 to 1477 (LNTILRAMTQ…IVENDFENRS (315 aa)) the chain is on the cytoplasmic side. One can recognise an ABC transporter 2 domain in the interval 1213 to 1464 (IIFENVDFAY…EDSIFRSMCS (252 aa)). Residue 1247 to 1254 (GRTGAGKS) coordinates ATP.

This sequence belongs to the ABC transporter superfamily. ABCC family. Conjugate transporter (TC 3.A.1.208) subfamily.

Its subcellular location is the cell membrane. It carries out the reaction a 1,2-diacyl-sn-glycero-3-phosphoethanolamine(in) + ATP + H2O = a 1,2-diacyl-sn-glycero-3-phosphoethanolamine(out) + ADP + phosphate + H(+). It catalyses the reaction Cd(2+)(in) + ATP + H2O = Cd(2+)(out) + ADP + phosphate + H(+). The catalysed reaction is an S-substituted glutathione(in) + ATP + H2O = an S-substituted glutathione(out) + ADP + phosphate + H(+). In terms of biological role, functions as a pleiotropic drug pump at the plasma membrane to clear toxic substances from the cytosol. Organic anion transporter involved in the detoxification of a wide range of toxic environmental organic anions that contain carboxyl groups. Required for tolerance to reveromycin A, tautomycin and leptomycin B. Required for oligomycin resistance. Required for rhodamine B resistance. Mediates the ATP-dependent efflux of rhodamine B. Involved in cadmium detoxification. Displays an energy-dependent efflux of cadmium and glutathione, suggesting that YOR1 transports both compounds as a bis-glutathionato-cadmium Cd-(GS)(2) complex. Confers resistance to rhodamine 6G and to doxorubicin. This Saccharomyces cerevisiae (strain ATCC 204508 / S288c) (Baker's yeast) protein is Oligomycin resistance ATP-dependent permease YOR1.